A 2512-amino-acid polypeptide reads, in one-letter code: Probable polyketide synthase 5 (2512 aa).

A Ketosynthase family 3 (KS3) domain is found at 17 to 447 (MKGVAIVGIG…GSNCCLLISE (431 aa)). Active-site for beta-ketoacyl synthase activity residues include C187, H329, and H368. The interval 638–671 (GVNPSFILGHSLGEIPTSYCSGMIDLDTFCYTVY) is acyl/malonyl transferase. The active-site For acyl/malonyl transferase activity is the S648. The tract at residues 928 to 1050 (IDHLGLSNSY…ANFQLLDHTI (123 aa)) is N-terminal hotdog fold. In terms of domain architecture, PKS/mFAS DH spans 928–1210 (IDHLGLSNSY…SKSLIPIKEL (283 aa)). The active-site Proton acceptor; for dehydratase activity is H962. The segment at 1067–1210 (TLARLTKNEI…SKSLIPIKEL (144 aa)) is C-terminal hotdog fold. The active-site Proton donor; for dehydratase activity is the D1125. The Carrier domain maps to 2430–2507 (AGSKNVDELF…VSIKIILNFL (78 aa)). The residue at position 2467 (S2467) is an O-(pantetheine 4'-phosphoryl)serine.

The cofactor is pantetheine 4'-phosphate.

Probable polyketide synthase. The sequence is that of Probable polyketide synthase 5 (pks5) from Dictyostelium discoideum (Social amoeba).